The primary structure comprises 185 residues: Ribosome-recycling factor (185 aa).

Belongs to the RRF family.

The protein resides in the cytoplasm. Its function is as follows. Responsible for the release of ribosomes from messenger RNA at the termination of protein biosynthesis. May increase the efficiency of translation by recycling ribosomes from one round of translation to another. This Streptococcus sanguinis (strain SK36) protein is Ribosome-recycling factor.